A 430-amino-acid chain; its full sequence is Enolase (430 aa).

Residue Gln163 participates in (2R)-2-phosphoglycerate binding. Glu205 serves as the catalytic Proton donor. Asp242, Glu287, and Asp314 together coordinate Mg(2+). (2R)-2-phosphoglycerate-binding residues include Lys339, Arg368, Ser369, and Lys390. Lys339 (proton acceptor) is an active-site residue.

Belongs to the enolase family. Mg(2+) serves as cofactor.

The protein localises to the cytoplasm. The protein resides in the secreted. It is found in the cell surface. It catalyses the reaction (2R)-2-phosphoglycerate = phosphoenolpyruvate + H2O. It participates in carbohydrate degradation; glycolysis; pyruvate from D-glyceraldehyde 3-phosphate: step 4/5. Catalyzes the reversible conversion of 2-phosphoglycerate (2-PG) into phosphoenolpyruvate (PEP). It is essential for the degradation of carbohydrates via glycolysis. The sequence is that of Enolase from Geobacillus kaustophilus (strain HTA426).